Consider the following 372-residue polypeptide: Glutamate 5-kinase (372 aa).

Lysine 14 serves as a coordination point for ATP. The substrate site is built by serine 54, aspartate 141, and asparagine 153. 173–174 (TD) is a binding site for ATP. The region spanning 280-358 (RGTLVLDAGA…DAIESILGYS (79 aa)) is the PUA domain.

The protein belongs to the glutamate 5-kinase family.

The protein resides in the cytoplasm. The enzyme catalyses L-glutamate + ATP = L-glutamyl 5-phosphate + ADP. It functions in the pathway amino-acid biosynthesis; L-proline biosynthesis; L-glutamate 5-semialdehyde from L-glutamate: step 1/2. Functionally, catalyzes the transfer of a phosphate group to glutamate to form L-glutamate 5-phosphate. The chain is Glutamate 5-kinase from Pseudomonas putida (strain GB-1).